We begin with the raw amino-acid sequence, 89 residues long: Small ribosomal subunit protein uS14A (89 aa).

Positions 29-62 are disordered; sequence AAGDRTALAKLPRDSNPNRLRLRDQTDGRPRGYM. Residues 49–58 are compositionally biased toward basic and acidic residues; the sequence is RLRDQTDGRP.

Belongs to the universal ribosomal protein uS14 family. Part of the 30S ribosomal subunit. Contacts proteins S3 and S10.

Functionally, binds 16S rRNA, required for the assembly of 30S particles and may also be responsible for determining the conformation of the 16S rRNA at the A site. This is Small ribosomal subunit protein uS14A from Enterococcus faecalis (strain ATCC 700802 / V583).